A 1690-amino-acid chain; its full sequence is DNA-directed RNA polymerase subunit beta' (1690 aa).

Zn(2+) contacts are provided by Cys63, Cys65, Cys78, and Cys81. Mg(2+)-binding residues include Asp753, Asp755, and Asp757. Zn(2+)-binding residues include Cys1107, Cys1295, Cys1302, and Cys1305.

It belongs to the RNA polymerase beta' chain family. In terms of assembly, the RNAP catalytic core consists of 2 alpha, 1 beta, 1 beta' and 1 omega subunit. When a sigma factor is associated with the core the holoenzyme is formed, which can initiate transcription. Requires Mg(2+) as cofactor. It depends on Zn(2+) as a cofactor.

It carries out the reaction RNA(n) + a ribonucleoside 5'-triphosphate = RNA(n+1) + diphosphate. In terms of biological role, DNA-dependent RNA polymerase catalyzes the transcription of DNA into RNA using the four ribonucleoside triphosphates as substrates. The protein is DNA-directed RNA polymerase subunit beta' of Thermotoga sp. (strain RQ2).